A 446-amino-acid chain; its full sequence is Neuropeptide Y receptor type 5 (446 aa).

Residues 1-42 (MGSEIPDYYNKTLASENNTVATRNSGFPVWEDYKGSVDDLQY) are Extracellular-facing. N-linked (GlcNAc...) asparagine glycans are attached at residues N10 and N17. Residues 43-63 (FLIGLYTFVSLLGFMGNLLIL) form a helical membrane-spanning segment. Over 64-77 (MAVMRKRNQKTTVN) the chain is Cytoplasmic. A helical transmembrane segment spans residues 78–98 (FLIGNLAFSDILVVLFCSPFT). Residues 99-117 (LTSVLLDQWMFGKVMCHIM) are Extracellular-facing. A disulfide bridge links C114 with C198. A helical transmembrane segment spans residues 118 to 138 (PFLQCVTVLVSTLILISIAIV). Residues 139–156 (RYHMIKHPVSNNLTANHG) are Cytoplasmic-facing. A helical membrane pass occupies residues 157-177 (YFLIATVWTLGLAICSPLPVF). Residues 178 to 208 (HSLVELQESFGSAWLSSRYLCVESWPSDSYR) are Extracellular-facing. Residues 209-229 (IAFTISLLLVQYILPLVCLTV) form a helical membrane-spanning segment. At 230–369 (SHTSVCRTIS…RKRSRSVFYR (140 aa)) the chain is on the cytoplasmic side. The tract at residues 297-325 (RPAPAGPALESREGRPPGKVGSMQSQPPP) is disordered. Residues 370 to 390 (LTVLILVFAVSWMPLHLFHVV) form a helical membrane-spanning segment. Over 391–407 (TDFNDNLISNRHFKLVY) the chain is Extracellular. The helical transmembrane segment at 408–428 (CICHLLGMMSCCLNPILYGFL) threads the bilayer. The Cytoplasmic portion of the chain corresponds to 429 to 446 (NNGIKADLMSLIHCLHVS). The S-palmitoyl cysteine moiety is linked to residue C442.

It belongs to the G-protein coupled receptor 1 family.

The protein resides in the cell membrane. In terms of biological role, receptor for neuropeptide Y and peptide YY. The activity of this receptor is mediated by G proteins that inhibit adenylate cyclase activity. Seems to be associated with food intake. Could be involved in feeding disorders. The protein is Neuropeptide Y receptor type 5 (NPY5R) of Sus scrofa (Pig).